Here is a 360-residue protein sequence, read N- to C-terminus: Aminomethyltransferase (360 aa).

The protein belongs to the GcvT family. In terms of assembly, the glycine cleavage system is composed of four proteins: P, T, L and H.

It catalyses the reaction N(6)-[(R)-S(8)-aminomethyldihydrolipoyl]-L-lysyl-[protein] + (6S)-5,6,7,8-tetrahydrofolate = N(6)-[(R)-dihydrolipoyl]-L-lysyl-[protein] + (6R)-5,10-methylene-5,6,7,8-tetrahydrofolate + NH4(+). Functionally, the glycine cleavage system catalyzes the degradation of glycine. This Legionella pneumophila (strain Lens) protein is Aminomethyltransferase.